Here is a 289-residue protein sequence, read N- to C-terminus: Phycobilisome 39 kDa linker polypeptide, phycocyanin-associated, rod (289 aa).

The PBS-linker domain occupies 2–180 (PITSAASRLG…LYRGYANSDR (179 aa)). The segment at 213-233 (SYLPSKQGTAPSRTFGRSSQG) is disordered. A compositionally biased stretch (polar residues) spans 216 to 233 (PSKQGTAPSRTFGRSSQG). In terms of domain architecture, CpcD-like spans 236–288 (PRLYRIEVTGISLPRYPKVRRSNKEFIVPYEQLSSTLQQINKLGGKVASITFA).

This sequence belongs to the phycobilisome linker protein family.

It is found in the cellular thylakoid membrane. Functionally, rod linker protein, associated with phycocyanin. Linker polypeptides determine the state of aggregation and the location of the disk-shaped phycobiliprotein units within the phycobilisome and modulate their spectroscopic properties in order to mediate a directed and optimal energy transfer. The chain is Phycobilisome 39 kDa linker polypeptide, phycocyanin-associated, rod (cpcI2) from Microchaete diplosiphon (Fremyella diplosiphon).